A 202-amino-acid polypeptide reads, in one-letter code: N-(5'-phosphoribosyl)anthranilate isomerase (202 aa).

This sequence belongs to the TrpF family.

The catalysed reaction is N-(5-phospho-beta-D-ribosyl)anthranilate = 1-(2-carboxyphenylamino)-1-deoxy-D-ribulose 5-phosphate. It functions in the pathway amino-acid biosynthesis; L-tryptophan biosynthesis; L-tryptophan from chorismate: step 3/5. The sequence is that of N-(5'-phosphoribosyl)anthranilate isomerase from Listeria monocytogenes serotype 4a (strain HCC23).